We begin with the raw amino-acid sequence, 398 residues long: Ubiquitin carboxyl-terminal hydrolase 17-like protein 6 (398 aa).

The USP domain occupies 80–375 (AGLQNMGNTC…QAYVLFYIQK (296 aa)). Cysteine 89 functions as the Nucleophile in the catalytic mechanism. The active-site Proton acceptor is the histidine 334.

It belongs to the peptidase C19 family. USP17 subfamily.

It is found in the nucleus. The protein localises to the cytoplasm. The enzyme catalyses Thiol-dependent hydrolysis of ester, thioester, amide, peptide and isopeptide bonds formed by the C-terminal Gly of ubiquitin (a 76-residue protein attached to proteins as an intracellular targeting signal).. Its function is as follows. Deubiquitinating enzyme that removes conjugated ubiquitin from specific proteins to regulate different cellular processes that may include cell proliferation, progression through the cell cycle, cell migration, and the cellular response to viral infection. Seems to be non-functional in the regulation of apoptosis. The chain is Ubiquitin carboxyl-terminal hydrolase 17-like protein 6 (USP17L6P) from Homo sapiens (Human).